Consider the following 328-residue polypeptide: Alanine racemase (328 aa).

Catalysis depends on K33, which acts as the Proton acceptor; specific for D-alanine. K33 carries the N6-(pyridoxal phosphate)lysine modification. R118 is a binding site for substrate. The active-site Proton acceptor; specific for L-alanine is the Y237. Residue M283 participates in substrate binding.

The protein belongs to the alanine racemase family. The cofactor is pyridoxal 5'-phosphate.

The enzyme catalyses L-alanine = D-alanine. The protein operates within amino-acid biosynthesis; D-alanine biosynthesis; D-alanine from L-alanine: step 1/1. Its function is as follows. Catalyzes the interconversion of L-alanine and D-alanine. May also act on other amino acids. The polypeptide is Alanine racemase (alr) (Campylobacter jejuni subsp. jejuni serotype O:2 (strain ATCC 700819 / NCTC 11168)).